The sequence spans 194 residues: Endoribonuclease YbeY (194 aa).

Zn(2+) contacts are provided by H151, H155, and H161.

The protein belongs to the endoribonuclease YbeY family. The cofactor is Zn(2+).

The protein resides in the cytoplasm. In terms of biological role, single strand-specific metallo-endoribonuclease involved in late-stage 70S ribosome quality control and in maturation of the 3' terminus of the 16S rRNA. This chain is Endoribonuclease YbeY, found in Gloeobacter violaceus (strain ATCC 29082 / PCC 7421).